We begin with the raw amino-acid sequence, 1235 residues long: Bromodomain-containing protein 8 (1235 aa).

Lys85 bears the N6-acetyllysine mark. The stretch at 97 to 171 (VRKLTAERVE…ATDAAYQARQ (75 aa)) forms a coiled coil. Residue Arg124 is modified to Phosphothreonine. Phosphoserine is present on residues Leu128 and Asp144. Residues 186–205 (RSPIDSASPGGDYPLGDLTP) form a disordered region. Ala264 is subject to Phosphothreonine. Residues Ser268, Ser284, Ser383, and Ser387 each carry the phosphoserine modification. Residue Lys469 forms a Glycyl lysine isopeptide (Lys-Gly) (interchain with G-Cter in SUMO2) linkage. Position 481 is an N6-acetyllysine; alternate (Lys481). Lys481 participates in a covalent cross-link: Glycyl lysine isopeptide (Lys-Gly) (interchain with G-Cter in SUMO1); alternate. Lys481 is covalently cross-linked (Glycyl lysine isopeptide (Lys-Gly) (interchain with G-Cter in SUMO2); alternate). Glycyl lysine isopeptide (Lys-Gly) (interchain with G-Cter in SUMO2) cross-links involve residues Lys509 and Lys575. The disordered stretch occupies residues 551-597 (TAAGEIVEADVAIGKGDETPLTNVKTEASPESMLSPSHGSNPIEDPL). Residue Ser579 is modified to Phosphoserine. Residue Lys612 forms a Glycyl lysine isopeptide (Lys-Gly) (interchain with G-Cter in SUMO2) linkage. Phosphoserine is present on residues Ser621, Ser637, and Ser641. Positions 621–672 (SQIKDAPGEDEEEDGVSEAASLEEPKEEDQGEGYLSEMDNEPPVSESDDGFS) are disordered. The region spanning 706–811 (IQAQKIWKKA…RDVLEQIQQF (106 aa)) is the Bromo 1 domain. Disordered regions lie at residues 827-848 (AKSLRGRDSTRKQDASEKDSVP), 903-940 (ETEDPEAEELEESSPEREPSELLVGDGGSEESQEAARK), and 966-999 (ESSEGCCPPSGTRQEGREIKASEGERELCRETEE). The span at 831–846 (RGRDSTRKQDASEKDS) shows a compositional bias: basic and acidic residues. The span at 905–915 (EDPEAEELEES) shows a compositional bias: acidic residues. Leu924 carries the post-translational modification Phosphoserine. Residues 979–999 (QEGREIKASEGERELCRETEE) are compositionally biased toward basic and acidic residues. Residues 1099 to 1207 (DDPVQDHLLF…QEVLEQIQVL (109 aa)) enclose the Bromo 2 domain.

In terms of assembly, component of the NuA4 histone acetyltransferase complex which contains the catalytic subunit KAT5/TIP60 and the subunits EP400, TRRAP/PAF400, BRD8/SMAP, EPC1, DMAP1/DNMAP1, RUVBL1/TIP49, RUVBL2, ING3, actin, ACTL6A/BAF53A, MORF4L1/MRG15, MORF4L2/MRGX, MRGBP, YEATS4/GAS41, VPS72/YL1 and MEAF6. The NuA4 complex interacts with MYC and the adenovirus E1A protein. Component of a NuA4-related complex which contains EP400, TRRAP/PAF400, SRCAP, BRD8/SMAP, EPC1, DMAP1/DNMAP1, RUVBL1/TIP49, RUVBL2, actin, ACTL6A/BAF53A, VPS72 and YEATS4/GAS41. BRD8 isoform 2 interacts with RXRA/NR2B1 and THRB/ERBA2. Component of a SWR1-like complex. As to expression, expressed in adipose tissue, brain, heart, kidney, liver, lung, pancreas, placenta and skeletal muscle.

The protein localises to the nucleus. May act as a coactivator during transcriptional activation by hormone-activated nuclear receptors (NR). Isoform 2 stimulates transcriptional activation by AR/DHTR, ESR1/NR3A1, RXRA/NR2B1 and THRB/ERBA2. At least isoform 1 and isoform 2 are components of the NuA4 histone acetyltransferase (HAT) complex which is involved in transcriptional activation of select genes principally by acetylation of nucleosomal histones H4 and H2A. This modification may both alter nucleosome - DNA interactions and promote interaction of the modified histones with other proteins which positively regulate transcription. This complex may be required for the activation of transcriptional programs associated with oncogene and proto-oncogene mediated growth induction, tumor suppressor mediated growth arrest and replicative senescence, apoptosis, and DNA repair. NuA4 may also play a direct role in DNA repair when recruited to sites of DNA damage. Component of a SWR1-like complex that specifically mediates the removal of histone H2A.Z/H2AZ1 from the nucleosome. The protein is Bromodomain-containing protein 8 (BRD8) of Homo sapiens (Human).